The following is a 325-amino-acid chain: UPF0285 protein MA_3856 (325 aa).

Belongs to the UPF0285 family.

In Methanosarcina acetivorans (strain ATCC 35395 / DSM 2834 / JCM 12185 / C2A), this protein is UPF0285 protein MA_3856.